The primary structure comprises 159 residues: Probable deoxyuridine 5'-triphosphate nucleotidohydrolase (159 aa).

This sequence belongs to the dCTP deaminase family. Archaeal dUTPase subfamily.

It carries out the reaction dUTP + H2O = dUMP + diphosphate + H(+). It functions in the pathway pyrimidine metabolism; dUMP biosynthesis; dUMP from dCTP (dUTP route): step 2/2. In terms of biological role, this enzyme is involved in nucleotide metabolism: it produces dUMP, the immediate precursor of thymidine nucleotides and it decreases the intracellular concentration of dUTP so that uracil cannot be incorporated into DNA. The sequence is that of Probable deoxyuridine 5'-triphosphate nucleotidohydrolase from Aeropyrum pernix (strain ATCC 700893 / DSM 11879 / JCM 9820 / NBRC 100138 / K1).